A 255-amino-acid polypeptide reads, in one-letter code: Folate receptor beta (255 aa).

An N-terminal signal peptide occupies residues 1 to 16 (MVWKWMPLLLLLVCVA). 8 disulfides stabilise this stretch: cysteine 31-cysteine 59, cysteine 51-cysteine 99, cysteine 60-cysteine 103, cysteine 83-cysteine 169, cysteine 90-cysteine 140, cysteine 129-cysteine 203, cysteine 133-cysteine 183, and cysteine 146-cysteine 163. Positions 97 and 101 each coordinate folate. An N-linked (GlcNAc...) asparagine glycan is attached at asparagine 115. Folate is bound by residues 118-122 (WRKER), 151-156 (HRGWDW), and serine 190. N-linked (GlcNAc...) asparagine glycosylation is present at asparagine 195. Asparagine 230 carries GPI-anchor amidated asparagine lipidation. The propeptide at 231–255 (AGEMLHGTGGLLLSLALMLQLWLLG) is removed in mature form.

The protein belongs to the folate receptor family. N-glycosylated. Expressed in placenta and hematopoietic cells. Expression is increased in malignant tissues.

The protein localises to the cell membrane. It localises to the secreted. Binds to folate and reduced folic acid derivatives and mediates delivery of 5-methyltetrahydrofolate and folate analogs into the interior of cells. Has high affinity for folate and folic acid analogs at neutral pH. Exposure to slightly acidic pH after receptor endocytosis triggers a conformation change that strongly reduces its affinity for folates and mediates their release. This Homo sapiens (Human) protein is Folate receptor beta (FOLR2).